A 243-amino-acid polypeptide reads, in one-letter code: PF03932 family protein CutC (243 aa).

Belongs to the CutC family.

The protein resides in the cytoplasm. This Glaesserella parasuis serovar 5 (strain SH0165) (Haemophilus parasuis) protein is PF03932 family protein CutC.